We begin with the raw amino-acid sequence, 159 residues long: Putative 4-hydroxy-4-methyl-2-oxoglutarate aldolase (159 aa).

Substrate-binding positions include 78 to 81 and R100; that span reads GDVI. D101 serves as a coordination point for a divalent metal cation.

It belongs to the class II aldolase/RraA-like family. In terms of assembly, homotrimer. It depends on a divalent metal cation as a cofactor.

The catalysed reaction is 4-hydroxy-4-methyl-2-oxoglutarate = 2 pyruvate. It catalyses the reaction oxaloacetate + H(+) = pyruvate + CO2. Functionally, catalyzes the aldol cleavage of 4-hydroxy-4-methyl-2-oxoglutarate (HMG) into 2 molecules of pyruvate. Also contains a secondary oxaloacetate (OAA) decarboxylase activity due to the common pyruvate enolate transition state formed following C-C bond cleavage in the retro-aldol and decarboxylation reactions. This is Putative 4-hydroxy-4-methyl-2-oxoglutarate aldolase from Mycobacterium sp. (strain KMS).